The following is a 293-amino-acid chain: Undecaprenyl-diphosphatase (293 aa).

7 consecutive transmembrane segments (helical) span residues 3 to 23 (IALA…EFLP), 43 to 63 (KGKI…CWEF), 85 to 105 (LNVI…GKAI), 109 to 129 (LFNP…ILWA), 203 to 223 (VATE…TVYE), 238 to 258 (IFGI…RWLL), and 269 to 289 (FAWY…THLI).

This sequence belongs to the UppP family.

The protein localises to the cell inner membrane. The catalysed reaction is di-trans,octa-cis-undecaprenyl diphosphate + H2O = di-trans,octa-cis-undecaprenyl phosphate + phosphate + H(+). In terms of biological role, catalyzes the dephosphorylation of undecaprenyl diphosphate (UPP). Confers resistance to bacitracin. The polypeptide is Undecaprenyl-diphosphatase (Ralstonia nicotianae (strain ATCC BAA-1114 / GMI1000) (Ralstonia solanacearum)).